The sequence spans 257 residues: Probable dihydroorotate dehydrogenase B (NAD(+)), electron transfer subunit (257 aa).

The region spanning 2–89 is the FAD-binding FR-type domain; sequence EKPVICRIKE…RGPYGTYFEP (88 aa). Positions 208, 213, 216, and 226 each coordinate [2Fe-2S] cluster.

This sequence belongs to the PyrK family. Heterotetramer of 2 PyrK and 2 PyrD type B subunits. Requires [2Fe-2S] cluster as cofactor. The cofactor is FAD.

It participates in pyrimidine metabolism; UMP biosynthesis via de novo pathway; orotate from (S)-dihydroorotate (NAD(+) route): step 1/1. Responsible for channeling the electrons from the oxidation of dihydroorotate from the FMN redox center in the PyrD type B subunit to the ultimate electron acceptor NAD(+). The chain is Probable dihydroorotate dehydrogenase B (NAD(+)), electron transfer subunit from Methanocaldococcus jannaschii (strain ATCC 43067 / DSM 2661 / JAL-1 / JCM 10045 / NBRC 100440) (Methanococcus jannaschii).